A 255-amino-acid polypeptide reads, in one-letter code: Carboxy-S-adenosyl-L-methionine synthase (255 aa).

S-adenosyl-L-methionine-binding positions include Tyr45, 70–72 (GCS), 124–125 (DI), and Asn139.

This sequence belongs to the class I-like SAM-binding methyltransferase superfamily. Cx-SAM synthase family. Homodimer.

The enzyme catalyses prephenate + S-adenosyl-L-methionine = carboxy-S-adenosyl-L-methionine + 3-phenylpyruvate + H2O. Functionally, catalyzes the conversion of S-adenosyl-L-methionine (SAM) to carboxy-S-adenosyl-L-methionine (Cx-SAM). In Hamiltonella defensa subsp. Acyrthosiphon pisum (strain 5AT), this protein is Carboxy-S-adenosyl-L-methionine synthase.